Here is a 256-residue protein sequence, read N- to C-terminus: MCLETTLTKNKTLALINQGYQVLAEYEMIEQKKLRGIYAIPSYSSLLLWFGVIFIHSGMYSESAFRFSILLPDNFPDENCLPTVIFQKDIFHPHICPISHSLDLSPVFKDWHKDQHHIWHILKYIQAIFADPEGSVCNTHNGEPIPLTDVNNMEAMRLLANNRVDFALRAKASIVWSWKHMFDKPPINDPHYIIFERYRPEKHQAMMKRIKSSSWYSLPTSTSPPSTCVARIESARQLLAEEEAQTRGFHSLEMVE.

The region spanning 17–179 (NQGYQVLAEY…AKASIVWSWK (163 aa)) is the UBC core domain.

It belongs to the ubiquitin-conjugating enzyme family. FTS subfamily.

The protein is Protein crossbronx-like of Drosophila mojavensis (Fruit fly).